Reading from the N-terminus, the 905-residue chain is Protein translocase subunit SecA (905 aa).

Residues Gln87, Gly105–Thr109, and Asp512 each bind ATP. The segment at Ala840–Ala905 is disordered. A compositionally biased stretch (low complexity) spans Gln843–Ser852. Over residues Glu853–Ala862 the composition is skewed to basic and acidic residues. The span at Glu863–Gln874 shows a compositional bias: polar residues. The Zn(2+) site is built by Cys886, Cys888, Cys897, and His898. A compositionally biased stretch (basic residues) spans Lys892–Ala905.

This sequence belongs to the SecA family. Monomer and homodimer. Part of the essential Sec protein translocation apparatus which comprises SecA, SecYEG and auxiliary proteins SecDF-YajC and YidC. It depends on Zn(2+) as a cofactor.

The protein resides in the cell inner membrane. Its subcellular location is the cytoplasm. It carries out the reaction ATP + H2O + cellular proteinSide 1 = ADP + phosphate + cellular proteinSide 2.. Functionally, part of the Sec protein translocase complex. Interacts with the SecYEG preprotein conducting channel. Has a central role in coupling the hydrolysis of ATP to the transfer of proteins into and across the cell membrane, serving both as a receptor for the preprotein-SecB complex and as an ATP-driven molecular motor driving the stepwise translocation of polypeptide chains across the membrane. The polypeptide is Protein translocase subunit SecA (Actinobacillus pleuropneumoniae serotype 3 (strain JL03)).